A 141-amino-acid chain; its full sequence is Nucleoside diphosphate kinase (141 aa).

ATP is bound by residues K11, F59, R87, T93, R104, and N114. H117 serves as the catalytic Pros-phosphohistidine intermediate.

This sequence belongs to the NDK family. As to quaternary structure, homotetramer. Mg(2+) is required as a cofactor.

It localises to the cytoplasm. It catalyses the reaction a 2'-deoxyribonucleoside 5'-diphosphate + ATP = a 2'-deoxyribonucleoside 5'-triphosphate + ADP. The enzyme catalyses a ribonucleoside 5'-diphosphate + ATP = a ribonucleoside 5'-triphosphate + ADP. Its function is as follows. Major role in the synthesis of nucleoside triphosphates other than ATP. The ATP gamma phosphate is transferred to the NDP beta phosphate via a ping-pong mechanism, using a phosphorylated active-site intermediate. This chain is Nucleoside diphosphate kinase, found in Acidovorax sp. (strain JS42).